The sequence spans 1171 residues: Phytochrome B (1171 aa).

The segment covering 1 to 19 (MASGSRATPTRSPSSARPA) has biased composition (low complexity). Positions 1–53 (MASGSRATPTRSPSSARPAAPRHQHHHSQSSGGSTSRAGGGGGGGGGGGGGAA) are disordered. A compositionally biased stretch (gly residues) spans 38–52 (AGGGGGGGGGGGGGA). One can recognise a GAF domain in the interval 259-442 (DVKLLCDTVV…AFGLQLNMEL (184 aa)). Cys364 is a phytochromobilin binding site. 2 PAS domains span residues 661–732 (VARE…LRGD) and 795–866 (DYKA…MIVL). The Histidine kinase domain maps to 943-1161 (YIYQEIKNPL…FFHIVLELPQ (219 aa)).

The protein belongs to the phytochrome family. As to quaternary structure, homodimer. In terms of processing, contains one covalently linked phytochromobilin chromophore.

Its function is as follows. Regulatory photoreceptor which exists in two forms that are reversibly interconvertible by light: the Pr form that absorbs maximally in the red region of the spectrum and the Pfr form that absorbs maximally in the far-red region. Photoconversion of Pr to Pfr induces an array of morphogenic responses, whereas reconversion of Pfr to Pr cancels the induction of those responses. Pfr controls the expression of a number of nuclear genes including those encoding the small subunit of ribulose-bisphosphate carboxylase, chlorophyll A/B binding protein, protochlorophyllide reductase, rRNA, etc. It also controls the expression of its own gene(s) in a negative feedback fashion. The chain is Phytochrome B (PHYB) from Oryza sativa subsp. indica (Rice).